A 691-amino-acid chain; its full sequence is Protein phosphatase Slingshot homolog (691 aa).

A DEK-C domain is found at 236–291 (EETERIIKLKLRDILRESDLENITSKEVRSALEQHTLCALQDYKEFIDNEMIIILA). The region spanning 295–436 (RPSEIFPYLY…LQTYQGILGA (142 aa)) is the Tyrosine-protein phosphatase domain. Cys380 serves as the catalytic Phosphocysteine intermediate. The stretch at 532-580 (NEHVLSKEQIIQEEKKVMELEKGPEWVVKNNVLEEMKETEERELPNFEL) forms a coiled coil. The disordered stretch occupies residues 585 to 620 (NQSRERDQETIKESSVITQGSSSLDEVFESSTPTRS). The span at 587–596 (SRERDQETIK) shows a compositional bias: basic and acidic residues. Over residues 597–619 (ESSVITQGSSSLDEVFESSTPTR) the composition is skewed to polar residues.

Belongs to the protein-tyrosine phosphatase family. In terms of assembly, interacts with actin and this stimulates phosphatase activity.

It localises to the cytoplasm. The protein resides in the cytoskeleton. Its subcellular location is the cleavage furrow. The protein localises to the midbody. It catalyses the reaction O-phospho-L-tyrosyl-[protein] + H2O = L-tyrosyl-[protein] + phosphate. The enzyme catalyses O-phospho-L-seryl-[protein] + H2O = L-seryl-[protein] + phosphate. It carries out the reaction O-phospho-L-threonyl-[protein] + H2O = L-threonyl-[protein] + phosphate. In terms of biological role, protein phosphatase which regulates actin filament dynamics. Dephosphorylates and activates the actin binding/depolymerizing factor cofilin, which subsequently binds to actin filaments and stimulates their disassembly. Required for completion of the gastrulation movement and for cytokinesis. This Xenopus laevis (African clawed frog) protein is Protein phosphatase Slingshot homolog (ssh).